Here is a 211-residue protein sequence, read N- to C-terminus: Arginine exporter protein ArgO (211 aa).

6 helical membrane-spanning segments follow: residues 1–21 (MISYYFQGFALGAAMILPLGP), 37–57 (LMIALLCALSDLVLISAGIFG), 68–88 (LLALVTWGGVAFLLWYGLGAL), 111–131 (IIATMLAVTWLNPHVYLDTFV), 147–167 (WFALGTISASFLWFFGLALLA), and 179–199 (AQRIINILVGVVMWLIAFQLA).

This sequence belongs to the LysE/ArgO transporter (TC 2.A.75) family.

It is found in the cell inner membrane. It carries out the reaction L-arginine(in) = L-arginine(out). In terms of biological role, involved in the export of arginine. Important to control the intracellular level of arginine and the correct balance between arginine and lysine. The sequence is that of Arginine exporter protein ArgO from Salmonella enteritidis PT4 (strain P125109).